Consider the following 601-residue polypeptide: Elongation factor 4 (601 aa).

The 183-residue stretch at D2–T184 folds into the tr-type G domain. GTP contacts are provided by residues D14–T19 and N131–D134.

This sequence belongs to the TRAFAC class translation factor GTPase superfamily. Classic translation factor GTPase family. LepA subfamily.

It localises to the cell inner membrane. The enzyme catalyses GTP + H2O = GDP + phosphate + H(+). In terms of biological role, required for accurate and efficient protein synthesis under certain stress conditions. May act as a fidelity factor of the translation reaction, by catalyzing a one-codon backward translocation of tRNAs on improperly translocated ribosomes. Back-translocation proceeds from a post-translocation (POST) complex to a pre-translocation (PRE) complex, thus giving elongation factor G a second chance to translocate the tRNAs correctly. Binds to ribosomes in a GTP-dependent manner. This chain is Elongation factor 4, found in Polynucleobacter necessarius subsp. necessarius (strain STIR1).